Here is a 358-residue protein sequence, read N- to C-terminus: Protein-arginine kinase (358 aa).

Residues 24–255 enclose the Phosphagen kinase C-terminal domain; the sequence is IVLSSRIRLA…KQLIRQERVA (232 aa). ATP-binding positions include 27–31, His-92, Arg-126, 177–181, and 208–213; these read SSRIR, RASVM, and RGIYGE. Positions 338 to 343 match the RDXXRA motif of the pArg binding pocket involved in allosteric regulation motif; it reads RDERRA.

The protein belongs to the ATP:guanido phosphotransferase family.

It carries out the reaction L-arginyl-[protein] + ATP = N(omega)-phospho-L-arginyl-[protein] + ADP + H(+). Appears to be allosterically activated by the binding of pArg-containing polypeptides to the pArg-binding pocket localized in the C-terminal domain of McsB. Functionally, catalyzes the specific phosphorylation of arginine residues in a large number of proteins. Is part of the bacterial stress response system. Protein arginine phosphorylation has a physiologically important role and is involved in the regulation of many critical cellular processes, such as protein homeostasis, motility, competence, and stringent and stress responses, by regulating gene expression and protein activity. The protein is Protein-arginine kinase of Shouchella clausii (strain KSM-K16) (Alkalihalobacillus clausii).